Here is a 374-residue protein sequence, read N- to C-terminus: Methylthioribose-1-phosphate isomerase (374 aa).

Aspartate 251 (proton donor) is an active-site residue.

Belongs to the eIF-2B alpha/beta/delta subunits family. MtnA subfamily.

The protein resides in the cytoplasm. The protein localises to the nucleus. The catalysed reaction is 5-(methylsulfanyl)-alpha-D-ribose 1-phosphate = 5-(methylsulfanyl)-D-ribulose 1-phosphate. It functions in the pathway amino-acid biosynthesis; L-methionine biosynthesis via salvage pathway; L-methionine from S-methyl-5-thio-alpha-D-ribose 1-phosphate: step 1/6. In terms of biological role, catalyzes the interconversion of methylthioribose-1-phosphate (MTR-1-P) into methylthioribulose-1-phosphate (MTRu-1-P). The protein is Methylthioribose-1-phosphate isomerase of Oryza sativa subsp. indica (Rice).